Reading from the N-terminus, the 447-residue chain is Peptide-N(4)-(N-acetyl-beta-glucosaminyl)asparagine amidase (447 aa).

4 residues coordinate Zn(2+): Cys209, Cys212, Cys241, and Cys244. Cys267 serves as the catalytic Nucleophile. Active-site residues include His294 and Asp311.

The protein belongs to the transglutaminase-like superfamily. PNGase family. Requires Zn(2+) as cofactor.

The protein localises to the cytoplasm. It carries out the reaction Hydrolysis of an N(4)-(acetyl-beta-D-glucosaminyl)asparagine residue in which the glucosamine residue may be further glycosylated, to yield a (substituted) N-acetyl-beta-D-glucosaminylamine and a peptide containing an aspartate residue.. Its function is as follows. Specifically deglycosylates the denatured form of N-linked glycoproteins in the cytoplasm and assists their proteasome-mediated degradation. Cleaves the beta-aspartyl-glucosamine (GlcNAc) of the glycan and the amide side chain of Asn, converting Asn to Asp. Prefers proteins containing high-mannose over those bearing complex type oligosaccharides. Can recognize misfolded proteins in the endoplasmic reticulum that are exported to the cytosol to be destroyed and deglycosylate them, while it has no activity toward native proteins. Deglycosylation is a prerequisite for subsequent proteasome-mediated degradation of some, but not all, misfolded glycoproteins. In Oryza sativa subsp. japonica (Rice), this protein is Peptide-N(4)-(N-acetyl-beta-glucosaminyl)asparagine amidase (PNG1).